We begin with the raw amino-acid sequence, 2021 residues long: Fanconi anemia group M protein homolog (2021 aa).

The residue at position 30 (S30) is a Phosphoserine. The Helicase ATP-binding domain maps to 86-254 (ISRSALFCNT…QVITNLLIGK (169 aa)). 99-106 (LPTGLGKT) is a binding site for ATP. A DEAH box motif is present at residues 202 to 205 (DEAH). A Helicase C-terminal domain is found at 437–612 (KLEEVILEHF…VLRLYQGSPR (176 aa)). Disordered regions lie at residues 638 to 657 (RSVQ…SKSN), 837 to 886 (PCRA…RMAD), 1002 to 1049 (CSPY…LPGT), 1244 to 1273 (GAAD…AISP), 1296 to 1319 (ASSS…SSKT), 1369 to 1441 (PRRT…RTCP), 1447 to 1466 (KGRN…RSQV), 1615 to 1700 (NKKQ…QPSI), and 1712 to 1732 (AQSH…ESRK). Residues 1018–1035 (ASHSAGNSQQNLESNSAK) show a composition bias toward polar residues. The segment covering 1249 to 1259 (SGRHSDKEIKD) has biased composition (basic and acidic residues). Positions 1370–1379 (RRTEVEHLTS) are enriched in basic and acidic residues. The segment covering 1388-1397 (RKTKKPKRNV) has biased composition (basic residues). At S1637 the chain carries Phosphoserine. The segment covering 1669-1682 (SGPSGSSVPPQVLS) has biased composition (low complexity). A compositionally biased stretch (polar residues) spans 1684–1700 (PSWNQSSRQRLQVQPSI). The segment at 1689–2009 (SSRQRLQVQP…LNQERQKPDT (321 aa)) is interaction with FAAP24.

It belongs to the DEAD box helicase family. DEAH subfamily. FANCM sub-subfamily. In terms of assembly, component of the Fanconi anemia (FA) core complex, which consists of CENPS, CENPX, FANCA, FANCB, FANCC, FANCE, FANCF, FANCG, FANCL, FANCM, FAAP24 and FAAP100. The FA core complex associates with Bloom syndrome (BLM) complex, which consists of at least BLM, DNA topoisomerase 3-alpha/TOP3A, RMI1/BLAP75, RPA1/RPA70 and RPA2/RPA32. This supercomplex between FA and BLM complexes has been called BRAFT. Forms a discrete complex with CENPS and CENPX, called FANCM-MHF; this interaction stimulates DNA binding and replication fork remodeling by FANCM and stabilizes the binding partners. Forms a heterodimer with FAAP24; this interaction increases FANCM single-stranded DNA-binding activity. Post-translationally, phosphorylated; hyperphosphorylated in response to genotoxic stress.

It localises to the nucleus. It catalyses the reaction ATP + H2O = ADP + phosphate + H(+). Its function is as follows. DNA-dependent ATPase component of the Fanconi anemia (FA) core complex. Required for the normal activation of the FA pathway, leading to monoubiquitination of the FANCI-FANCD2 complex in response to DNA damage, cellular resistance to DNA cross-linking drugs, and prevention of chromosomal breakage. In complex with CENPS and CENPX, binds double-stranded DNA (dsDNA), fork-structured DNA (fsDNA) and Holliday junction substrates. Its ATP-dependent DNA branch migration activity can process branched DNA structures such as a movable replication fork. This activity is strongly stimulated in the presence of CENPS and CENPX. In complex with FAAP24, efficiently binds to single-strand DNA (ssDNA), splayed-arm DNA, and 3'-flap substrates. In vitro, on its own, strongly binds ssDNA oligomers and weakly fsDNA, but does not bind to dsDNA. This Mus musculus (Mouse) protein is Fanconi anemia group M protein homolog (Fancm).